Here is a 150-residue protein sequence, read N- to C-terminus: Dual specificity protein phosphatase 23 (150 aa).

The Tyrosine-protein phosphatase domain maps to asparagine 7–lysine 150. Cysteine 95 functions as the Phosphocysteine intermediate in the catalytic mechanism.

This sequence belongs to the protein-tyrosine phosphatase family. Non-receptor class dual specificity subfamily. Widely expressed.

The protein resides in the cytoplasm. Its subcellular location is the cytosol. It localises to the nucleus. It carries out the reaction O-phospho-L-tyrosyl-[protein] + H2O = L-tyrosyl-[protein] + phosphate. The enzyme catalyses O-phospho-L-seryl-[protein] + H2O = L-seryl-[protein] + phosphate. It catalyses the reaction O-phospho-L-threonyl-[protein] + H2O = L-threonyl-[protein] + phosphate. Functionally, protein phosphatase that mediates dephosphorylation of proteins phosphorylated on Tyr and Ser/Thr residues. In vitro, it can dephosphorylate p44-ERK1 (MAPK3) but not p54 SAPK-beta (MAPK10) in vitro. Able to enhance activation of JNK and p38 (MAPK14). In Mus musculus (Mouse), this protein is Dual specificity protein phosphatase 23 (Dusp23).